We begin with the raw amino-acid sequence, 267 residues long: Regulatory protein RecX (267 aa).

This sequence belongs to the RecX family.

It localises to the cytoplasm. In terms of biological role, modulates RecA activity. This is Regulatory protein RecX from Staphylococcus carnosus (strain TM300).